The sequence spans 745 residues: DNA ligase (745 aa).

The interval 1–27 (MRNHGPGSERKDACVSAPDPTFSDDVP) is disordered. NAD(+) contacts are provided by residues 57 to 61 (DAEYD), 106 to 107 (SL), and Glu135. The active-site N6-AMP-lysine intermediate is the Lys137. 2 residues coordinate NAD(+): Arg158 and Glu197. The segment at 216–235 (GKPPFANPRNAAAGSLRQKD) is disordered. Positions 313 and 337 each coordinate NAD(+). Positions 431, 434, 450, and 456 each coordinate Zn(2+). Residues 649–738 (DGPRLLDGIT…PEAARAARLS (90 aa)) form the BRCT domain.

This sequence belongs to the NAD-dependent DNA ligase family. LigA subfamily. It depends on Mg(2+) as a cofactor. Mn(2+) serves as cofactor.

The enzyme catalyses NAD(+) + (deoxyribonucleotide)n-3'-hydroxyl + 5'-phospho-(deoxyribonucleotide)m = (deoxyribonucleotide)n+m + AMP + beta-nicotinamide D-nucleotide.. Its function is as follows. DNA ligase that catalyzes the formation of phosphodiester linkages between 5'-phosphoryl and 3'-hydroxyl groups in double-stranded DNA using NAD as a coenzyme and as the energy source for the reaction. It is essential for DNA replication and repair of damaged DNA. This chain is DNA ligase, found in Thermobifida fusca (strain YX).